Consider the following 189-residue polypeptide: Thymidylate kinase (189 aa).

7–14 is a binding site for ATP; the sequence is GIDTAGKS.

Belongs to the thymidylate kinase family.

The catalysed reaction is dTMP + ATP = dTDP + ADP. Phosphorylation of dTMP to form dTDP in both de novo and salvage pathways of dTTP synthesis. In Aliarcobacter butzleri (strain RM4018) (Arcobacter butzleri), this protein is Thymidylate kinase.